The sequence spans 222 residues: Large ribosomal subunit protein uL4 (222 aa).

Residues 50-72 (TRGRSEVSHSTKKPFRQKGTGNA) form a disordered region.

Belongs to the universal ribosomal protein uL4 family. As to quaternary structure, part of the 50S ribosomal subunit.

In terms of biological role, one of the primary rRNA binding proteins, this protein initially binds near the 5'-end of the 23S rRNA. It is important during the early stages of 50S assembly. It makes multiple contacts with different domains of the 23S rRNA in the assembled 50S subunit and ribosome. Forms part of the polypeptide exit tunnel. This chain is Large ribosomal subunit protein uL4, found in Chlamydia trachomatis serovar A (strain ATCC VR-571B / DSM 19440 / HAR-13).